We begin with the raw amino-acid sequence, 476 residues long: Doublesex- and mab-3-related transcription factor 3 (476 aa).

The segment at residues 29 to 76 is a DNA-binding region (DM); it reads CARCRNHGVLSWLKGHKRYCRFKDCTCEKCILIIERQRVMAAQVALRR. Disordered regions lie at residues 89 to 130 and 147 to 195; these read DSLR…RPTA and GTLP…SKNC. The span at 102 to 121 shows a compositional bias: low complexity; that stretch reads DAAATAATASQSSPASQASQ. Positions 165 to 174 are enriched in polar residues; it reads DSSSTDNTAE. Basic and acidic residues predominate over residues 176–185; it reads FSDKDTDQRS. Residues 255–290 form the DMA domain; it reads RPPLEVLKKIFPNQKPTVLELILKGCGGDLVSAVEV. The span at 418-432 shows a compositional bias: polar residues; sequence NSTSVFRSSPVLSSR. The disordered stretch occupies residues 418–476; the sequence is NSTSVFRSSPVLSSRTTEDPRISIPDDGCPIVTKQSIYTEDDYDERSDSSDSRILNTSS.

It belongs to the DMRT family. As to expression, expressed in the ventral spinal cord, in a restrical population of neurons migrating ventrically in the developing spinal cord at 11.5 dpc.

It is found in the nucleus. In terms of biological role, probable transcription factor that plays a role in configuring the spinal circuits controlling stride in vertebrates. Involved in neuronal specification within specific subdivision of spinal cord neurons and in the development of a coordinated locomotor network controlling limb movements. May regulate transcription during sexual development. The polypeptide is Doublesex- and mab-3-related transcription factor 3 (Dmrt3) (Mus musculus (Mouse)).